The primary structure comprises 222 residues: Latexin (222 aa).

The Cystatin LXN-type 1 domain maps to 1–97 (MEIPPTNYPA…NFTFEGETGK (97 aa)). Lysine 55 bears the N6-acetyllysine mark. Residues 98-117 (NPDEEDNTFYQRLKSMKEPL) form an alpha-helical linker region. The region spanning 118 to 222 (EAQNIPDNFG…SRLPKEVQLE (105 aa)) is the Cystatin LXN-type 2 domain.

It belongs to the protease inhibitor I47 (latexin) family. As to expression, highly expressed in heart, prostate, ovary, kidney, pancreas, and colon, moderate or low in other tissues including brain.

The protein localises to the cytoplasm. Its function is as follows. Hardly reversible, non-competitive, and potent inhibitor of CPA1, CPA2 and CPA4. May play a role in inflammation. The polypeptide is Latexin (LXN) (Homo sapiens (Human)).